The chain runs to 130 residues: DNA-directed RNA polymerase subunit omega (130 aa).

Residues 110–130 (EELLKGLEGLAPPEEQPEEDE) form a disordered region.

Belongs to the RNA polymerase subunit omega family. As to quaternary structure, the RNAP catalytic core consists of 2 alpha, 1 beta, 1 beta' and 1 omega subunit. When a sigma factor is associated with the core the holoenzyme is formed, which can initiate transcription.

The catalysed reaction is RNA(n) + a ribonucleoside 5'-triphosphate = RNA(n+1) + diphosphate. Promotes RNA polymerase assembly. Latches the N- and C-terminal regions of the beta' subunit thereby facilitating its interaction with the beta and alpha subunits. This is DNA-directed RNA polymerase subunit omega from Rhodopseudomonas palustris (strain HaA2).